The chain runs to 253 residues: Uridine phosphorylase (253 aa).

The protein belongs to the PNP/UDP phosphorylase family. Homohexamer.

The protein resides in the cytoplasm. The catalysed reaction is uridine + phosphate = alpha-D-ribose 1-phosphate + uracil. Its pathway is pyrimidine metabolism; UMP biosynthesis via salvage pathway; uracil from uridine (phosphorylase route): step 1/1. Catalyzes the reversible phosphorylytic cleavage of uridine to uracil and ribose-1-phosphate. The protein is Uridine phosphorylase (udp) of Klebsiella aerogenes (Enterobacter aerogenes).